A 241-amino-acid polypeptide reads, in one-letter code: 1-(5-phosphoribosyl)-5-[(5-phosphoribosylamino)methylideneamino] imidazole-4-carboxamide isomerase (241 aa).

Asp10 (proton acceptor) is an active-site residue. The active-site Proton donor is the Asp129.

It belongs to the HisA/HisF family.

The protein resides in the cytoplasm. The enzyme catalyses 1-(5-phospho-beta-D-ribosyl)-5-[(5-phospho-beta-D-ribosylamino)methylideneamino]imidazole-4-carboxamide = 5-[(5-phospho-1-deoxy-D-ribulos-1-ylimino)methylamino]-1-(5-phospho-beta-D-ribosyl)imidazole-4-carboxamide. It participates in amino-acid biosynthesis; L-histidine biosynthesis; L-histidine from 5-phospho-alpha-D-ribose 1-diphosphate: step 4/9. The chain is 1-(5-phosphoribosyl)-5-[(5-phosphoribosylamino)methylideneamino] imidazole-4-carboxamide isomerase from Salinispora arenicola (strain CNS-205).